Consider the following 999-residue polypeptide: Bifunctional glutamine synthetase adenylyltransferase/adenylyl-removing enzyme (999 aa).

The tract at residues 1 to 493 (MFVRKPATER…LHAKLFYQPL (493 aa)) is adenylyl removase. The interval 498–999 (GHTALGIGEG…KAVVRKIFGG (502 aa)) is adenylyl transferase.

It belongs to the GlnE family. It depends on Mg(2+) as a cofactor.

The enzyme catalyses [glutamine synthetase]-O(4)-(5'-adenylyl)-L-tyrosine + phosphate = [glutamine synthetase]-L-tyrosine + ADP. The catalysed reaction is [glutamine synthetase]-L-tyrosine + ATP = [glutamine synthetase]-O(4)-(5'-adenylyl)-L-tyrosine + diphosphate. Functionally, involved in the regulation of glutamine synthetase GlnA, a key enzyme in the process to assimilate ammonia. When cellular nitrogen levels are high, the C-terminal adenylyl transferase (AT) inactivates GlnA by covalent transfer of an adenylyl group from ATP to specific tyrosine residue of GlnA, thus reducing its activity. Conversely, when nitrogen levels are low, the N-terminal adenylyl removase (AR) activates GlnA by removing the adenylyl group by phosphorolysis, increasing its activity. The regulatory region of GlnE binds the signal transduction protein PII (GlnB) which indicates the nitrogen status of the cell. This chain is Bifunctional glutamine synthetase adenylyltransferase/adenylyl-removing enzyme, found in Mycolicibacterium smegmatis (strain ATCC 700084 / mc(2)155) (Mycobacterium smegmatis).